A 134-amino-acid polypeptide reads, in one-letter code: Small ribosomal subunit protein uS12 (134 aa).

Asp-89 is modified (3-methylthioaspartic acid). The disordered stretch occupies residues 103 to 134; sequence DTAGVKDRKQGRSKYGAKRPKPGEAAATGKKK. A compositionally biased stretch (basic residues) spans 113 to 122; that stretch reads GRSKYGAKRP.

Belongs to the universal ribosomal protein uS12 family. In terms of assembly, part of the 30S ribosomal subunit. Contacts proteins S8 and S17. May interact with IF1 in the 30S initiation complex.

In terms of biological role, with S4 and S5 plays an important role in translational accuracy. Interacts with and stabilizes bases of the 16S rRNA that are involved in tRNA selection in the A site and with the mRNA backbone. Located at the interface of the 30S and 50S subunits, it traverses the body of the 30S subunit contacting proteins on the other side and probably holding the rRNA structure together. The combined cluster of proteins S8, S12 and S17 appears to hold together the shoulder and platform of the 30S subunit. The polypeptide is Small ribosomal subunit protein uS12 (Thermosynechococcus vestitus (strain NIES-2133 / IAM M-273 / BP-1)).